Here is a 428-residue protein sequence, read N- to C-terminus: Cytochrome c biogenesis protein CcsB (428 aa).

3 helical membrane-spanning segments follow: residues 14-34, 72-92, and 162-182; these read LRFA…GTFI, SNWF…CSFR, and LGPI…AYGN.

The protein belongs to the Ccs1/CcsB family. May interact with CcsA.

It is found in the cellular thylakoid membrane. Functionally, required during biogenesis of c-type cytochromes (cytochrome c6 and cytochrome f) at the step of heme attachment. In Prochlorococcus marinus subsp. pastoris (strain CCMP1986 / NIES-2087 / MED4), this protein is Cytochrome c biogenesis protein CcsB.